The sequence spans 350 residues: MIVLGIESSCDETGVGIIDLADDGTMTIVGDAVASSMEQHARFGGVVPEIASRAHLESMIPVMKEALAQAGVERPDAVAATVGPGLAGALLVGASAAKAYAAAWGVPFYGVNHLGGHVAVANLEGEELPHSIALLVSGGHTQILEVQAVGKPMRELGSTLDDAAGEAYDKVARLLGLGYPGGPVVDKLAARGNRKAIRFPRGLSRADDLRGEHRYDFSFSGVKTSVARYVESAEREGRVISVEDVCASFQEAVVDVLTSKAIMACKDTGASVLLLGGGVAANSRLRELAAARCQSASIELRVPSFKLCTDNGVMIAAVASQLIHEGAQPSGLSVGTDTSLEVEIPLVHSL.

Fe cation is bound by residues His113 and His117. Substrate contacts are provided by residues 135–139 (LVSGG), Asp169, Gly182, Asp186, and Asn282. Residue Asp310 coordinates Fe cation.

The protein belongs to the KAE1 / TsaD family. It depends on Fe(2+) as a cofactor.

The protein localises to the cytoplasm. It catalyses the reaction L-threonylcarbamoyladenylate + adenosine(37) in tRNA = N(6)-L-threonylcarbamoyladenosine(37) in tRNA + AMP + H(+). In terms of biological role, required for the formation of a threonylcarbamoyl group on adenosine at position 37 (t(6)A37) in tRNAs that read codons beginning with adenine. Is involved in the transfer of the threonylcarbamoyl moiety of threonylcarbamoyl-AMP (TC-AMP) to the N6 group of A37, together with TsaE and TsaB. TsaD likely plays a direct catalytic role in this reaction. The protein is tRNA N6-adenosine threonylcarbamoyltransferase of Corynebacterium diphtheriae (strain ATCC 700971 / NCTC 13129 / Biotype gravis).